The sequence spans 938 residues: Auxilin (938 aa).

The disordered stretch occupies residues Ala-19–Pro-41. 3 repeat units span residues Asn-61 to Asp-64, Asn-65 to Asp-68, and Thr-69 to Asp-72. Residues Asn-61–Asp-72 are 3 X 4 AA approximate tandem repeats. The Phosphatase tensin-type domain occupies Ser-80–Lys-247. Phosphoserine is present on Ser-137. Cys-189 acts as the Phosphocysteine intermediate in catalysis. One can recognise a C2 tensin-type domain in the interval Phe-253–Gln-391. The SH3-binding motif lies at Pro-434–Pro-442. The tract at residues Glu-467–Lys-801 is disordered. Residues Ser-478 and Ser-481 each carry the phosphoserine modification. Residues Asp-531–Leu-548 are compositionally biased toward polar residues. The segment covering Thr-559–Val-569 has biased composition (low complexity). Composition is skewed to polar residues over residues Val-579 to Pro-596 and Phe-624 to Val-654. Ser-595 is modified (phosphoserine). Residues Ser-679–His-694 are compositionally biased toward low complexity. Positions Asn-754–Phe-781 are enriched in polar residues. The J domain maps to Thr-874 to Tyr-938.

In terms of assembly, forms a complex composed of HSPA8, CLTC and DNAJC6. Interacts with HSPA8/HSC70 in an ATP-dependent manner; this interaction stimulates the HSPA8's ATPase activity. Interacts with CLTC; this interaction produces a local change in heavy-chain contacts, creating a detectable global distortion of the clathrin coat. Interacts with AP2A2. Interacts with DNM1(GTP-bound form); this interaction allows clathrin-coated vesicle (CCV) formation at the plasma membrane. In terms of processing, the N-terminus is blocked. Phosphorylation at Ser-595 modulates its ability to bind CLTC and therefore the synaptic vesicle endocytosis (SVE).

The protein resides in the cytoplasmic vesicle. The protein localises to the clathrin-coated vesicle. May act as a protein phosphatase and/or a lipid phosphatase. Co-chaperone that recruits HSPA8/HSC70 to clathrin-coated vesicles (CCVs) and promotes the ATP-dependent dissociation of clathrin from CCVs and participates in clathrin-mediated endocytosis of synaptic vesicles and their recycling and also in intracellular trafficking. Firstly, binds tightly to the clathrin cages, at a ratio of one DNAJC6 per clathrin triskelion. The HSPA8:ATP complex then binds to the clathrin-auxilin cage, initially at a ratio of one HSPA8 per triskelion leading to ATP hydrolysis stimulation and causing a conformational change in the HSPA8. This cycle is repeated three times to drive to a complex containing the clathrin-auxilin cage associated to three HSPA8:ADP complex. The ATP hydrolysis of the third HSPA8:ATP complex leads to a concerted dismantling of the cage into component triskelia. Then, dissociates from the released triskelia and be recycled to initiate another cycle of HSPA8's recruitment. Also acts during the early steps of clathrin-coated vesicle (CCV) formation through its interaction with the GTP bound form of DNM1. The sequence is that of Auxilin from Mus musculus (Mouse).